The chain runs to 346 residues: Ephrin-B1 (346 aa).

The N-terminal stretch at 1 to 27 (MARPGQRWLGKWLVAMVVWALCRLATP) is a signal peptide. Residues 28–237 (LAKNLEPVSW…GDPDGFFNSK (210 aa)) lie on the Extracellular side of the membrane. One can recognise an Ephrin RBD domain in the interval 30 to 164 (KNLEPVSWSS…TRTMKIIMKV (135 aa)). Cystine bridges form between Cys64/Cys101 and Cys89/Cys153. Asn139 is a glycosylation site (N-linked (GlcNAc...) asparagine). Positions 169-228 (NAVTPEQLTTSRPSKEADNTVKMATQAPGSRGSLGDSDGKHETVNQEEKSGPGASGGSSG) are disordered. Over residues 205–218 (SDGKHETVNQEEKS) the composition is skewed to basic and acidic residues. Residues 238–258 (VALFAAVGAGCVIFLLIIIFL) traverse the membrane as a helical segment. The Cytoplasmic segment spans residues 259-346 (TVLLLKLRKR…QSPANIYYKV (88 aa)). Positions 260–273 (VLLLKLRKRHRKHT) match the Nuclear localization signal motif. The segment at 263–294 (LKLRKRHRKHTQQRAAALSLSTLASPKGGSGT) is interaction with ZHX2. Phosphoserine is present on residues Ser281 and Ser287. Positions 344-346 (YKV) match the PDZ-binding motif.

The protein belongs to the ephrin family. Interacts (via PDZ-binding motif) with GRIP1 and GRIP2 (via PDZ domain 6). Interacts with TLE1. The intracellular domain peptide interacts with ZHX2; the interaction enhances ZHX2 transcriptional repression activity. Post-translationally, inducible phosphorylation of tyrosine residues in the cytoplasmic domain. In terms of processing, proteolytically processed. The ectodomain is cleaved, probably by a metalloprotease, to produce a membrane-tethered C-terminal fragment. This fragment is then further processed by the gamma-secretase complex to yield a soluble intracellular domain peptide which can translocate to the nucleus. The intracellular domain peptide is highly labile suggesting that it is targeted for degradation by the proteasome. As to expression, widely expressed. Detected in both neuronal and non-neuronal tissues. Seems to have particularly strong expression in retina, sciatic nerve, heart and spinal cord.

The protein resides in the cell membrane. The protein localises to the membrane raft. It is found in the nucleus. Cell surface transmembrane ligand for Eph receptors, a family of receptor tyrosine kinases which are crucial for migration, repulsion and adhesion during neuronal, vascular and epithelial development. Binding to Eph receptors residing on adjacent cells leads to contact-dependent bidirectional signaling into neighboring cells. Shows high affinity for the receptor tyrosine kinase EPHB1/ELK. Can also bind EPHB2 and EPHB3. Binds to, and induces collapse of, commissural axons/growth cones in vitro. May play a role in constraining the orientation of longitudinally projecting axons. This chain is Ephrin-B1 (EFNB1), found in Homo sapiens (Human).